A 238-amino-acid chain; its full sequence is IkB-like protein (238 aa).

ANK repeat units lie at residues 47 to 76, 86 to 119, 123 to 152, and 157 to 186; these read NGSSVFMWICIYGRIDFLKFLFKQESYPGE, DGNSALHYLAEKKNHLILEEVLGYFGKNGTRICL, NGITPVMKAAMRGRSLNMLSLIKFGADPTQ, and RGFTAWDWAVFTGNMELVKSLNHDYQKPLY. A Nuclear localization signal motif is present at residues 80 to 86; sequence PHRRDKD. The Nuclear localization signal signature appears at 202–213; the sequence is KKKPKIIITGCK. Residues 205–212 carry the PxIxITxC motif; Interaction with host PPP3CA motif; that stretch reads PKIIITGC. Residues 227–230 carry the FLCV motif motif; sequence FLCV.

Belongs to the asfivirus A238L family. Interacts with host PPIA. Interacts with host PPP3CA/Calcineurin. Interacts with host RELA/p65; interaction of the 32 kDa form with host RELA results in the formation of a stable complex with NF-kappa-B. Interacts with host PPP3R1. Interacts with host EP300; this interaction inhibits the association of host EP300 with host RELA, JUN and NFATC2. The protein exists in a 28 kDa and a 32 kDa form, probably due to post-translational modifications which are neither phosphorylation, nor sumoylation.

It localises to the host nucleus. Its subcellular location is the host cytoplasm. In terms of biological role, ikB-like protein that inhibits the binding of NF-kappa-B to DNA, thereby downregulating pro-inflammatory cytokine production. Forms a heterodimer with the NF-kappa-B subunit RELA/p65 and prevents the activation of the NF-kappa-B transcription factor. Inhibits calcineurin function, which is required for the induction of nuclear factor of activated T cells (NFAT)-dependent immune response genes. Prevents the binding of substrates to calcineurin without affecting the phosphatase activity. Does not contain the serine residues that are phosphorylated by host IkB kinase and thus is not degraded following stimulation of the NFkB pathway. This chain is IkB-like protein (A238L), found in African swine fever virus (isolate Warthog/Namibia/Wart80/1980) (ASFV).